A 422-amino-acid chain; its full sequence is UDP-N-acetylmuramoylalanine--D-glutamate ligase (422 aa).

102–108 provides a ligand contact to ATP; that stretch reads GTNGKTT.

It belongs to the MurCDEF family.

It is found in the cytoplasm. The enzyme catalyses UDP-N-acetyl-alpha-D-muramoyl-L-alanine + D-glutamate + ATP = UDP-N-acetyl-alpha-D-muramoyl-L-alanyl-D-glutamate + ADP + phosphate + H(+). Its pathway is cell wall biogenesis; peptidoglycan biosynthesis. Its function is as follows. Cell wall formation. Catalyzes the addition of glutamate to the nucleotide precursor UDP-N-acetylmuramoyl-L-alanine (UMA). The polypeptide is UDP-N-acetylmuramoylalanine--D-glutamate ligase (Helicobacter pylori (strain HPAG1)).